A 349-amino-acid polypeptide reads, in one-letter code: Galanin receptor type 1 (349 aa).

The Extracellular segment spans residues 1-36 (MELAVGNLSEGNASWPEPPAPEPGPLFGIGVENFVT). Residues Asn-7 and Asn-12 are each glycosylated (N-linked (GlcNAc...) asparagine). Residues 37–57 (LVVFGLIFALGVLGNSLVITV) traverse the membrane as a helical segment. Over 58–70 (LARSKPGKPRSTT) the chain is Cytoplasmic. The chain crosses the membrane as a helical span at residues 71–91 (NLFILNLSIADLAYLLFCIPF). The Extracellular segment spans residues 92–109 (QATVYALPTWVLGAFICK). The cysteines at positions 108 and 187 are disulfide-linked. A helical transmembrane segment spans residues 110–131 (FIHYFFTVSMLVSIFTLAAMSV). Residues 132-151 (DRYVAIVHSRRSSSLRVSRN) are Cytoplasmic-facing. A helical membrane pass occupies residues 152-172 (ALLGVGCIWALSIAMASPVAY). The Extracellular segment spans residues 173–200 (HQGLFHPRASNQTFCWEQWPDPRHKKAY). N-linked (GlcNAc...) asparagine glycosylation occurs at Asn-183. The chain crosses the membrane as a helical span at residues 201–221 (VVCTFVFGYLLPLLLICFCYA). The Cytoplasmic segment spans residues 222–248 (KVLNHLHKKLKNMSKKSEASKKKTAQT). Residues 249-269 (VLVVVVVFGISWLPHHIIHLW) traverse the membrane as a helical segment. Topologically, residues 270 to 271 (AE) are extracellular. Residues 272-292 (FGVFPLTPASFLFRITAHCLA) form a helical membrane-spanning segment. Topologically, residues 293-349 (YSNSSVNPIIYAFLSENFRKAYKQVFKCHIRKDSHLSDTKESKSRIDTPPSTNCTHV) are cytoplasmic. Cys-320 is lipidated: S-palmitoyl cysteine.

Belongs to the G-protein coupled receptor 1 family. In terms of assembly, interacts with GRP39 AND HTR1A. Palmitoylated on at least one of the three cysteine residues present in the C-terminal part.

The protein localises to the cell membrane. Receptor for the hormone galanin. The activity of this receptor is mediated by G proteins that inhibit adenylate cyclase activity. This Homo sapiens (Human) protein is Galanin receptor type 1 (GALR1).